Reading from the N-terminus, the 122-residue chain is Large ribosomal subunit protein bL12 (122 aa).

Belongs to the bacterial ribosomal protein bL12 family. In terms of assembly, homodimer. Part of the ribosomal stalk of the 50S ribosomal subunit. Forms a multimeric L10(L12)X complex, where L10 forms an elongated spine to which 2 to 4 L12 dimers bind in a sequential fashion. Binds GTP-bound translation factors.

Forms part of the ribosomal stalk which helps the ribosome interact with GTP-bound translation factors. Is thus essential for accurate translation. The polypeptide is Large ribosomal subunit protein bL12 (Buchnera aphidicola subsp. Cinara cedri (strain Cc)).